The chain runs to 133 residues: UPF0102 protein AB57_1130 (133 aa).

Belongs to the UPF0102 family.

The sequence is that of UPF0102 protein AB57_1130 from Acinetobacter baumannii (strain AB0057).